A 252-amino-acid chain; its full sequence is 5-oxoprolinase subunit A (252 aa).

This sequence belongs to the LamB/PxpA family. In terms of assembly, forms a complex composed of PxpA, PxpB and PxpC.

It catalyses the reaction 5-oxo-L-proline + ATP + 2 H2O = L-glutamate + ADP + phosphate + H(+). Functionally, catalyzes the cleavage of 5-oxoproline to form L-glutamate coupled to the hydrolysis of ATP to ADP and inorganic phosphate. This chain is 5-oxoprolinase subunit A, found in Mycobacterium marinum (strain ATCC BAA-535 / M).